The sequence spans 65 residues: Large ribosomal subunit protein uL29 (65 aa).

The protein belongs to the universal ribosomal protein uL29 family.

This is Large ribosomal subunit protein uL29 from Hyphomonas neptunium (strain ATCC 15444).